The sequence spans 387 residues: 3-ketoacyl-CoA thiolase (387 aa).

Cys-91 (acyl-thioester intermediate) is an active-site residue. Residues His-343 and Cys-373 each act as proton acceptor in the active site.

Belongs to the thiolase-like superfamily. Thiolase family. In terms of assembly, heterotetramer of two alpha chains (FadB) and two beta chains (FadA).

The protein localises to the cytoplasm. It catalyses the reaction an acyl-CoA + acetyl-CoA = a 3-oxoacyl-CoA + CoA. The protein operates within lipid metabolism; fatty acid beta-oxidation. Its function is as follows. Catalyzes the final step of fatty acid oxidation in which acetyl-CoA is released and the CoA ester of a fatty acid two carbons shorter is formed. This chain is 3-ketoacyl-CoA thiolase, found in Shewanella sp. (strain W3-18-1).